A 229-amino-acid chain; its full sequence is Uracil-DNA glycosylase (229 aa).

Catalysis depends on Asp64, which acts as the Proton acceptor.

The protein belongs to the uracil-DNA glycosylase (UDG) superfamily. UNG family.

It localises to the cytoplasm. It catalyses the reaction Hydrolyzes single-stranded DNA or mismatched double-stranded DNA and polynucleotides, releasing free uracil.. Functionally, excises uracil residues from the DNA which can arise as a result of misincorporation of dUMP residues by DNA polymerase or due to deamination of cytosine. This is Uracil-DNA glycosylase from Escherichia coli O45:K1 (strain S88 / ExPEC).